A 135-amino-acid chain; its full sequence is uncharacterized protein (135 aa).

This is an uncharacterized protein from Archaeoglobus fulgidus (strain ATCC 49558 / DSM 4304 / JCM 9628 / NBRC 100126 / VC-16).